The chain runs to 668 residues: Spindle assembly abnormal protein 6 homolog (668 aa).

The 53-residue stretch at 39–91 (VHKKELVVRLSDDTDPFFLYNLTLGEEDFQSLKNQQGLLVEFSAFPQRFIDLL) folds into the PISA domain. A coiled-coil region spans residues 182-482 (LGVTQQALAE…NVIAWLNKQL (301 aa)). Positions 623 to 668 (GSVPVKGQRNGSSAGTVPVRPALPKSGSSPILSAYFPGQQSRLPAS) are disordered.

Nine homodimers form a cartwheel structure with an internal diameter of 23 nM and radial spokes connecting to the microtubule triplets.

It is found in the cytoplasm. The protein localises to the cytoskeleton. The protein resides in the microtubule organizing center. Its subcellular location is the centrosome. Its function is as follows. Central scaffolding component of the centrioles ensuring their 9-fold symmetry. Required for centrosome biogenesis and duplication: required both for mother-centriole-dependent centriole duplication and deuterosome-dependent centriole amplification in multiciliated cells. The protein is Spindle assembly abnormal protein 6 homolog (sas6) of Xenopus laevis (African clawed frog).